The sequence spans 282 residues: Energy-coupling factor transporter ATP-binding protein EcfA1 (282 aa).

One can recognise an ABC transporter domain in the interval 9–243; it reads IEIDNLSFKY…NDELLNIGLD (235 aa). 43–50 serves as a coordination point for ATP; it reads GHNGSGKS.

The protein belongs to the ABC transporter superfamily. Energy-coupling factor EcfA family. Forms a stable energy-coupling factor (ECF) transporter complex composed of 2 membrane-embedded substrate-binding proteins (S component), 2 ATP-binding proteins (A component) and 2 transmembrane proteins (T component).

It is found in the cell membrane. In terms of biological role, ATP-binding (A) component of a common energy-coupling factor (ECF) ABC-transporter complex. Unlike classic ABC transporters this ECF transporter provides the energy necessary to transport a number of different substrates. In Ligilactobacillus salivarius (strain UCC118) (Lactobacillus salivarius), this protein is Energy-coupling factor transporter ATP-binding protein EcfA1.